The sequence spans 305 residues: Non-homologous end joining protein Ku (305 aa).

The Ku domain maps to serine 16–alanine 202. Residues glycine 263–alanine 305 are disordered.

It belongs to the prokaryotic Ku family. As to quaternary structure, homodimer. Interacts with LigD.

Functionally, with LigD forms a non-homologous end joining (NHEJ) DNA repair enzyme, which repairs dsDNA breaks with reduced fidelity. Binds linear dsDNA with 5'- and 3'- overhangs but not closed circular dsDNA nor ssDNA. Recruits and stimulates the ligase activity of LigD. In Acidobacterium capsulatum (strain ATCC 51196 / DSM 11244 / BCRC 80197 / JCM 7670 / NBRC 15755 / NCIMB 13165 / 161), this protein is Non-homologous end joining protein Ku.